The sequence spans 49 residues: GVSCLCDSDGPSVRGNTLSGTLWLYPSGCPSGWHNCKAHGPTIGWCCKQ.

3 cysteine pairs are disulfide-bonded: Cys-4–Cys-46, Cys-6–Cys-36, and Cys-29–Cys-47.

Belongs to the sea anemone sodium channel inhibitory toxin family. Type I subfamily.

It is found in the secreted. The protein resides in the nematocyst. Binds specifically to voltage-gated sodium channels (Nav) (site 3), thereby delaying their inactivation. This toxin retains the greatest capacity to discriminate between the cardiac (Nav1.5/SCN5A) and neuronal sodium channels (2.5 nM versus 120 nM, when electrophysiologically tested and 14 nM versus 400 nM, when tested by ion flux), whereas its paralog Anthopleurin-B has the highest affinity of all anemone toxins for the mammalian sodium channel. Its ability to differentiate between cardiac and skeletal channels appears to be associated with domain 4 of the channel. This toxin does not slow or inhibit closed-state inactivation of cardiac sodium channels, but selectively modifies inactivation from the open-state. It does not display phospholipid-binding activities, suggesting that the domain IV S3-S4 linker is located at the extracellular surface and not buried in the phospholipid bilayer. The sequence is that of Delta-actitoxin-Axm1a from Anthopleura xanthogrammica (Giant green sea anemone).